Here is a 170-residue protein sequence, read N- to C-terminus: Photosystem I assembly protein Ycf3 (170 aa).

TPR repeat units follow at residues 35-68 (AFTY…EIDP), 72-105 (SYIL…NPFL), and 120-153 (GEQA…TPGN).

It belongs to the Ycf3 family.

It localises to the plastid. Its subcellular location is the chloroplast thylakoid membrane. In terms of biological role, essential for the assembly of the photosystem I (PSI) complex. May act as a chaperone-like factor to guide the assembly of the PSI subunits. The polypeptide is Photosystem I assembly protein Ycf3 (Zea mays (Maize)).